Reading from the N-terminus, the 250-residue chain is C-X-C motif chemokine 16 (250 aa).

Residues 1–24 (MPLWELWFFLLALFLAWLTPPGNG) form the signal peptide. Over 25–200 (NEGSMAGSCP…NVGATAGTSA (176 aa)) the chain is Extracellular. Disulfide bonds link C33–C63 and C35–C77. Residues 105 to 186 (VAHQQHLAPQ…AKSEARENQE (82 aa)) are disordered. Polar residues-rich tracts occupy residues 128-147 (DSST…TQKP) and 163-172 (TSETDTSTVG). The helical transmembrane segment at 201-221 (LVPVLSLLVIIFLLTGVLLYV) threads the bilayer. Over 222-250 (MCKKRQEQSRQYPPDPQLHYVPVASNINT) the chain is Cytoplasmic.

Belongs to the intercrine alpha (chemokine CxC) family. Glycosylated.

The protein resides in the membrane. Induces a strong chemotactic response. Induces calcium mobilization. Binds to CXCR6/Bonzo. Also acts as a scavenger receptor on macrophages, which specifically binds to OxLDL (oxidized low density lipoprotein), suggesting that it may be involved in pathophysiology such as atherogenesis. The sequence is that of C-X-C motif chemokine 16 (CXCL16) from Sus scrofa (Pig).